The primary structure comprises 98 residues: Small ribosomal subunit protein bS6c (98 aa).

It belongs to the bacterial ribosomal protein bS6 family.

Its subcellular location is the plastid. The protein localises to the chloroplast. Its function is as follows. Binds together with bS18 to 16S ribosomal RNA. The chain is Small ribosomal subunit protein bS6c from Phaeodactylum tricornutum (strain CCAP 1055/1).